We begin with the raw amino-acid sequence, 438 residues long: V-type ATP synthase beta chain (438 aa).

This sequence belongs to the ATPase alpha/beta chains family.

Produces ATP from ADP in the presence of a proton gradient across the membrane. The V-type beta chain is a regulatory subunit. The polypeptide is V-type ATP synthase beta chain (Chlamydia trachomatis serovar L2b (strain UCH-1/proctitis)).